A 505-amino-acid chain; its full sequence is MEPSWLQELMAHPFLLLILLCMSLLLFQVIRLYQRRRWMIRALHLFPAPPAHWFYGHKEFYPVKEFEVYHKLMEKYPCAVPLWVGPFTMFFSVHDPDYAKILLKRQDPKSAVSHKILESWVGRGLVTLDGSKWKKHRQIVKPGFNISILKIFITMMSESVRMMLNKWEEHIAQNSRLELFQHVSLMTLDSIMKCAFSHQGSIQLDSTLDSYLKAVFNLSKISNQRMNNFLHHNDLVFKFSSQGQIFSKFNQELHQFTEKVIQDRKESLKDKLKQDTTQKRRWDFLDILLSAKSENTKDFSEADLQAEVKTFMFAGHDTTSSAISWILYCLAKYPEHQQRCRDEIRELLGDGSSITWEHLSQMPYTTMCIKECLRLYAPVVNISRLLDKPITFPDGRSLPAGITVFINIWALHHNPYFWEDPQVFNPLRFSRENSEKIHPYAFIPFSAGLRNCIGQHFAIIECKVAVALTLLRFKLAPDHSRPPQPVRQVVLKSKNGIHVFAKKVC.

Topologically, residues 1–9 are cytoplasmic; it reads MEPSWLQEL. Residues 10–30 traverse the membrane as a helical; Signal-anchor for type II membrane protein segment; it reads MAHPFLLLILLCMSLLLFQVI. The Lumenal segment spans residues 31–505; that stretch reads RLYQRRRWMI…GIHVFAKKVC (475 aa). C452 is a binding site for heme.

Belongs to the cytochrome P450 family. Heme is required as a cofactor. Preferentially detected in breast carcinoma tissue and mammary gland, whereas only marginal expression is found in all other tested tissues.

It localises to the endoplasmic reticulum membrane. The protein resides in the microsome membrane. It catalyses the reaction an organic molecule + reduced [NADPH--hemoprotein reductase] + O2 = an alcohol + oxidized [NADPH--hemoprotein reductase] + H2O + H(+). It carries out the reaction dodecanoate + reduced [NADPH--hemoprotein reductase] + O2 = 7-hydroxydodecanoate + oxidized [NADPH--hemoprotein reductase] + H2O + H(+). The catalysed reaction is dodecanoate + reduced [NADPH--hemoprotein reductase] + O2 = 8-hydroxydodecanoate + oxidized [NADPH--hemoprotein reductase] + H2O + H(+). The enzyme catalyses dodecanoate + reduced [NADPH--hemoprotein reductase] + O2 = 9-hydroxydodecanoate + oxidized [NADPH--hemoprotein reductase] + H2O + H(+). It catalyses the reaction dodecanoate + reduced [NADPH--hemoprotein reductase] + O2 = 10-hydroxydodecanoate + oxidized [NADPH--hemoprotein reductase] + H2O + H(+). It carries out the reaction dodecanoate + reduced [NADPH--hemoprotein reductase] + O2 = 11-hydroxydodecanoate + oxidized [NADPH--hemoprotein reductase] + H2O + H(+). The catalysed reaction is tetradecanoate + reduced [NADPH--hemoprotein reductase] + O2 = 9-hydroxytetradecanoate + oxidized [NADPH--hemoprotein reductase] + H2O + H(+). The enzyme catalyses tetradecanoate + reduced [NADPH--hemoprotein reductase] + O2 = 10-hydroxytetradecanoate + oxidized [NADPH--hemoprotein reductase] + H2O + H(+). It catalyses the reaction tetradecanoate + reduced [NADPH--hemoprotein reductase] + O2 = 11-hydroxytetradecanoate + oxidized [NADPH--hemoprotein reductase] + H2O + H(+). It carries out the reaction tetradecanoate + reduced [NADPH--hemoprotein reductase] + O2 = 12-hydroxytetradecanoate + oxidized [NADPH--hemoprotein reductase] + H2O + H(+). The catalysed reaction is (5Z,8Z,11Z,14Z)-eicosatetraenoate + reduced [NADPH--hemoprotein reductase] + O2 = (14S,15R)-epoxy-(5Z,8Z,11Z)-eicosatrienoate + oxidized [NADPH--hemoprotein reductase] + H2O + H(+). In terms of biological role, a cytochrome P450 monooxygenase that catalyzes the in-chain oxidation of fatty acids. Catalyzes the hydroxylation of carbon-hydrogen bonds. Hydroxylates lauric and myristic acids predominantly at the omega-4 and omega-2 positions, respectively. Catalyzes the epoxidation of double bonds of polyunsaturated fatty acids (PUFA). Displays an absolute stereoselectivity in the epoxidation of arachidonic acid producing the 14(S),15(R)-epoxyeicosatrienoic acid (EET) enantiomer. Mechanistically, uses molecular oxygen inserting one oxygen atom into a substrate, and reducing the second into a water molecule, with two electrons provided by NADPH via cytochrome P450 reductase (CPR; NADPH-ferrihemoprotein reductase). The chain is Cytochrome P450 4Z1 from Homo sapiens (Human).